Here is a 495-residue protein sequence, read N- to C-terminus: L-arabinose isomerase (495 aa).

Mn(2+)-binding residues include E305, E332, H349, and H448.

The protein belongs to the arabinose isomerase family. Requires Mn(2+) as cofactor.

The catalysed reaction is beta-L-arabinopyranose = L-ribulose. Its pathway is carbohydrate degradation; L-arabinose degradation via L-ribulose; D-xylulose 5-phosphate from L-arabinose (bacterial route): step 1/3. Functionally, catalyzes the conversion of L-arabinose to L-ribulose. The sequence is that of L-arabinose isomerase from Mannheimia succiniciproducens (strain KCTC 0769BP / MBEL55E).